Consider the following 264-residue polypeptide: Sec-independent protein translocase protein TatC (264 aa).

A run of 6 helical transmembrane segments spans residues 20–40 (VVVITGAVTAFLLAFHAEPAE), 85–105 (FFAQVYIAALVGVTVSTPVAV), 131–151 (AVGLFAAGCAFSYIVVIPYIL), 175–195 (FVLQFLLAFGISFQLPLVMFA), 211–231 (IRYALLGIVIFGAAITPDGSG), and 232–252 (VTMWFVAGPMIGLYFAGMFFA).

This sequence belongs to the TatC family. As to quaternary structure, forms a complex with TatA.

It is found in the cell membrane. In terms of biological role, part of the twin-arginine translocation (Tat) system that transports large folded proteins containing a characteristic twin-arginine motif in their signal peptide across membranes. The protein is Sec-independent protein translocase protein TatC of Cenarchaeum symbiosum (strain A).